We begin with the raw amino-acid sequence, 87 residues long: Large ribosomal subunit protein bL27 (87 aa).

The tract at residues 1–21 is disordered; the sequence is MAHKKAGGSSRNGRDSESKRL.

Belongs to the bacterial ribosomal protein bL27 family.

The polypeptide is Large ribosomal subunit protein bL27 (Paraburkholderia phytofirmans (strain DSM 17436 / LMG 22146 / PsJN) (Burkholderia phytofirmans)).